A 148-amino-acid chain; its full sequence is 3-dehydroquinate dehydratase (148 aa).

Catalysis depends on tyrosine 23, which acts as the Proton acceptor. Residues asparagine 75, histidine 81, and aspartate 88 each contribute to the substrate site. Residue histidine 101 is the Proton donor of the active site. Residues 102–103 (LS) and arginine 112 contribute to the substrate site.

The protein belongs to the type-II 3-dehydroquinase family. As to quaternary structure, homododecamer.

It carries out the reaction 3-dehydroquinate = 3-dehydroshikimate + H2O. Its pathway is metabolic intermediate biosynthesis; chorismate biosynthesis; chorismate from D-erythrose 4-phosphate and phosphoenolpyruvate: step 3/7. In terms of biological role, catalyzes a trans-dehydration via an enolate intermediate. This is 3-dehydroquinate dehydratase from Xanthomonas oryzae pv. oryzae (strain MAFF 311018).